The sequence spans 195 residues: Ethylene-responsive transcription factor ERF018 (195 aa).

The segment covering methionine 1–arginine 13 has biased composition (basic and acidic residues). The segment at methionine 1–lysine 22 is disordered. Residues lysine 20–proline 77 constitute a DNA-binding region (AP2/ERF).

It belongs to the AP2/ERF transcription factor family. ERF subfamily.

Its subcellular location is the nucleus. Functionally, probably acts as a transcriptional activator. Binds to the GCC-box pathogenesis-related promoter element. May be involved in the regulation of gene expression by stress factors and by components of stress signal transduction pathways. In Arabidopsis thaliana (Mouse-ear cress), this protein is Ethylene-responsive transcription factor ERF018 (ERF018).